The sequence spans 671 residues: Zinc finger protein 750 (671 aa).

A CCHC-type zinc finger spans residues 25-51 (YKCFQCPFTCNEKSHLFNHMKYGLCKN). C27, C30, H43, and C49 together coordinate Zn(2+). 3 disordered regions span residues 66–87 (PKVN…SPVP), 366–433 (ETSP…KDFT), and 592–671 (SSPG…PRVS). Composition is skewed to polar residues over residues 67–78 (KVNSTDQKQPSN) and 402–412 (SPTNFTQNSQG).

The protein resides in the nucleus. Functionally, transcription factor involved in epidermis differentiation. This chain is Zinc finger protein 750 (znf750), found in Xenopus tropicalis (Western clawed frog).